The chain runs to 90 residues: Large ribosomal subunit protein eL31 (90 aa).

This sequence belongs to the eukaryotic ribosomal protein eL31 family.

The protein is Large ribosomal subunit protein eL31 of Natronomonas pharaonis (strain ATCC 35678 / DSM 2160 / CIP 103997 / JCM 8858 / NBRC 14720 / NCIMB 2260 / Gabara) (Halobacterium pharaonis).